A 519-amino-acid polypeptide reads, in one-letter code: Probable anion transporter 3, chloroplastic (519 aa).

Residues 1–76 (MAPPGQLLPL…PPPPATSLPG (76 aa)) constitute a chloroplast transit peptide. Residues 56–72 (LPFAPPRRLSRPPPPAT) show a composition bias toward pro residues. The interval 56–82 (LPFAPPRRLSRPPPPATSLPGASPGGG) is disordered. 12 helical membrane passes run 100–120 (VAAM…VMSV), 138–158 (VVQS…GALV), 166–186 (VMAY…WAAA), 188–208 (SLWL…VALP), 229–249 (IAMA…PIIM), 253–273 (GIFG…LVWI), 326–346 (WALI…LSWM), 362–382 (AWFS…AGVV), 403–423 (IGFV…SPVI), 424–444 (ASAW…GFLV), 460–480 (MSNT…GFFV), and 488–508 (GFLI…DIFA).

This sequence belongs to the major facilitator superfamily. Sodium/anion cotransporter (TC 2.A.1.14) family.

It is found in the plastid. Its subcellular location is the chloroplast membrane. Its function is as follows. Probable anion transporter. The protein is Probable anion transporter 3, chloroplastic (PHT4;3) of Oryza sativa subsp. japonica (Rice).